The chain runs to 203 residues: Small ribosomal subunit protein uS3 (203 aa).

Residues 39 to 113 (IREIIRRNFL…NHVLNAKNIA (75 aa)) form the KH type-2 domain.

It belongs to the universal ribosomal protein uS3 family. In terms of assembly, part of the 30S ribosomal subunit. Forms a tight complex with proteins S10 and S14.

Its function is as follows. Binds the lower part of the 30S subunit head. Binds mRNA in the 70S ribosome, positioning it for translation. This Carsonella ruddii protein is Small ribosomal subunit protein uS3.